Consider the following 97-residue polypeptide: Putative membrane protein insertion efficiency factor (97 aa).

Belongs to the UPF0161 family.

The protein resides in the cell membrane. In terms of biological role, could be involved in insertion of integral membrane proteins into the membrane. This is Putative membrane protein insertion efficiency factor from Lactobacillus gasseri (strain ATCC 33323 / DSM 20243 / BCRC 14619 / CIP 102991 / JCM 1131 / KCTC 3163 / NCIMB 11718 / NCTC 13722 / AM63).